Consider the following 155-residue polypeptide: Putative methyl-CpG-binding domain protein 12 (155 aa).

The CW-type zinc finger occupies 1–53 (MVQCTDCKKWRLIPSMQHYNIIKETQLQTPFVCGTTSGWTPNMSCNVPQDGTT). The MBD-associated domain (MAD) signature appears at 3–45 (QCTDCKKWRLIPSMQHYNIIKETQLQTPFVCGTTSGWTPNMSC). Cysteine 4, cysteine 7, cysteine 33, and cysteine 45 together coordinate Zn(2+). The 74-residue stretch at 53–126 (TCDTWPSIPP…SQFSFQIPKP (74 aa)) folds into the MBD domain. The disordered stretch occupies residues 130–155 (NYVKKRTRPVKRRKSSKDNNCEKGKK). The span at 133–144 (KKRTRPVKRRKS) shows a compositional bias: basic residues. The short motif at 140–147 (KRRKSSKD) is the Nuclear localization signal element. Residues 145-155 (SKDNNCEKGKK) show a composition bias toward basic and acidic residues.

The protein resides in the nucleus. Functionally, probable transcriptional regulator. In Arabidopsis thaliana (Mouse-ear cress), this protein is Putative methyl-CpG-binding domain protein 12 (MBD12).